A 256-amino-acid polypeptide reads, in one-letter code: MIQSITSQGLVLYNRNFREDDKLVKIFTEQVGKRMFFVKHAGQSKLAPVIQPLVLARFLLRINDDGLSYIEDYHEVMTFPKINSDLFVMAYATYVAALADASLQDNQQDAPLFAFLQKTLELMEAGLDYQVLTNIFEIQILTRFGISLNFNECVFCHRVGQAFDFSFKYGTCLCPEHYHEDERRCHLNPNIPYLLNQFQAIDFETLETISLKPGIKQELRQFMDQLYEEYVGIHLKSKKFIDSLADWGQLLKEEKK.

This sequence belongs to the RecO family.

In terms of biological role, involved in DNA repair and RecF pathway recombination. This Streptococcus pneumoniae serotype 2 (strain D39 / NCTC 7466) protein is DNA repair protein RecO.